Here is a 229-residue protein sequence, read N- to C-terminus: UPF0758 protein Cbei_0490 (229 aa).

In terms of domain architecture, MPN spans 107-229 (KITSPKDLAS…FVSLKERGLI (123 aa)). Zn(2+) is bound by residues H178, H180, and D191. The JAMM motif motif lies at 178 to 191 (HNHPSGDPTPSRED).

It belongs to the UPF0758 family.

The chain is UPF0758 protein Cbei_0490 from Clostridium beijerinckii (strain ATCC 51743 / NCIMB 8052) (Clostridium acetobutylicum).